An 84-amino-acid chain; its full sequence is UPF0473 protein CLD_2004 (84 aa).

It belongs to the UPF0473 family.

The sequence is that of UPF0473 protein CLD_2004 from Clostridium botulinum (strain Okra / Type B1).